Consider the following 433-residue polypeptide: Tol-Pal system protein TolB (433 aa).

The N-terminal stretch at 1 to 26 is a signal peptide; sequence MNKLRLFRSFFAFLLPFGMATGAAHG.

It belongs to the TolB family. The Tol-Pal system is composed of five core proteins: the inner membrane proteins TolA, TolQ and TolR, the periplasmic protein TolB and the outer membrane protein Pal. They form a network linking the inner and outer membranes and the peptidoglycan layer.

Its subcellular location is the periplasm. Its function is as follows. Part of the Tol-Pal system, which plays a role in outer membrane invagination during cell division and is important for maintaining outer membrane integrity. This Methylobacillus flagellatus (strain ATCC 51484 / DSM 6875 / VKM B-1610 / KT) protein is Tol-Pal system protein TolB.